The following is a 446-amino-acid chain: Sensor protein PfeS (446 aa).

At 1-9 (MRRHPLLWK) the chain is on the cytoplasmic side. Residues 10-30 (LALLQVGFCLLLTWLIYTWGL) form a helical membrane-spanning segment. Topologically, residues 31 to 155 (SVERSTYFLA…LLPGGLTPWT (125 aa)) are periplasmic. The helical transmembrane segment at 156 to 176 (HLVTHGIVPTLLAALLGLLLY) threads the bilayer. One can recognise an HAMP domain in the interval 177–233 (RHLVVPLNRLRDRADALRADELESTPLAAPLAARRDELGELAQALEHMAERLRLSLA). At 177–446 (RHLVVPLNRL…CLHLWLPAAA (270 aa)) the chain is on the cytoplasmic side. A Histidine kinase domain is found at 241-446 (TLSHELRTPL…CLHLWLPAAA (206 aa)). At histidine 244 the chain carries Phosphohistidine; by autocatalysis.

It localises to the cell inner membrane. It catalyses the reaction ATP + protein L-histidine = ADP + protein N-phospho-L-histidine.. Functionally, member of the two-component regulatory system PfeR/PfeS. May activate PfeR by phosphorylation. This is Sensor protein PfeS (pfeS) from Pseudomonas aeruginosa (strain ATCC 15692 / DSM 22644 / CIP 104116 / JCM 14847 / LMG 12228 / 1C / PRS 101 / PAO1).